Here is a 130-residue protein sequence, read N- to C-terminus: Small ribosomal subunit protein eS17 (130 aa).

Residues 74-84 (QEEERERRDNY) show a composition bias toward basic and acidic residues. Residues 74–97 (QEEERERRDNYMPEISTVDPSQLT) form a disordered region.

Belongs to the eukaryotic ribosomal protein eS17 family.

This Caenorhabditis elegans protein is Small ribosomal subunit protein eS17 (rps-17).